Reading from the N-terminus, the 125-residue chain is Holo-[acyl-carrier-protein] synthase (125 aa).

Mg(2+)-binding residues include glutamate 9 and glutamine 58.

The protein belongs to the P-Pant transferase superfamily. AcpS family. Mg(2+) is required as a cofactor.

The protein localises to the cytoplasm. It catalyses the reaction apo-[ACP] + CoA = holo-[ACP] + adenosine 3',5'-bisphosphate + H(+). Functionally, transfers the 4'-phosphopantetheine moiety from coenzyme A to a Ser of acyl-carrier-protein. The polypeptide is Holo-[acyl-carrier-protein] synthase (Rhodopirellula baltica (strain DSM 10527 / NCIMB 13988 / SH1)).